A 274-amino-acid polypeptide reads, in one-letter code: Carboxy-S-adenosyl-L-methionine synthase (274 aa).

Residues Tyr-59, Gly-93–Ser-95, Asp-149–Ile-150, Asn-164, and Arg-231 each bind S-adenosyl-L-methionine.

It belongs to the class I-like SAM-binding methyltransferase superfamily. Cx-SAM synthase family. As to quaternary structure, homodimer.

The catalysed reaction is prephenate + S-adenosyl-L-methionine = carboxy-S-adenosyl-L-methionine + 3-phenylpyruvate + H2O. In terms of biological role, catalyzes the conversion of S-adenosyl-L-methionine (SAM) to carboxy-S-adenosyl-L-methionine (Cx-SAM). In Psychrobacter sp. (strain PRwf-1), this protein is Carboxy-S-adenosyl-L-methionine synthase.